The primary structure comprises 139 residues: Thiosulfate:glutathione sulfurtransferase (139 aa).

Serine 26 is modified (phosphoserine). The 102-residue stretch at 37-138 (HDPNVVLVDV…WVSHGGDKLD (102 aa)) folds into the Rhodanese domain. The active-site Cysteine persulfide intermediate is the cysteine 98.

It localises to the mitochondrion. It carries out the reaction thiosulfate + glutathione = S-sulfanylglutathione + sulfite + H(+). With respect to regulation, GSS(-) is a potent inhibitor of RDL1, since the presence of the sulfur dioxygenase strongly increases the RDL1 catalytic activity. Its function is as follows. Thiosulfate:glutathione sulfurtransferase (TST) required to produce S-sulfanylglutathione (GSS(-)), a central intermediate in hydrogen sulfide metabolism. Provides the link between the first step in H(2)S metabolism performed by the sulfide:quinone oxidoreductase (SQOR) which catalyzes the conversion of H(2)S to thiosulfate, and the sulfur dioxygenase (SDO) which uses GSS(-) as substrate. The thermodynamic coupling of the irreversible SDO and reversible TST reactions provides a model for the physiologically relevant reaction with thiosulfate as the sulfane donor. The protein is Thiosulfate:glutathione sulfurtransferase (RDL1) of Saccharomyces cerevisiae (strain ATCC 204508 / S288c) (Baker's yeast).